The chain runs to 213 residues: 3-isopropylmalate dehydratase small subunit (213 aa).

The protein belongs to the LeuD family. LeuD type 1 subfamily. In terms of assembly, heterodimer of LeuC and LeuD.

The catalysed reaction is (2R,3S)-3-isopropylmalate = (2S)-2-isopropylmalate. The protein operates within amino-acid biosynthesis; L-leucine biosynthesis; L-leucine from 3-methyl-2-oxobutanoate: step 2/4. Its function is as follows. Catalyzes the isomerization between 2-isopropylmalate and 3-isopropylmalate, via the formation of 2-isopropylmaleate. The protein is 3-isopropylmalate dehydratase small subunit of Magnetococcus marinus (strain ATCC BAA-1437 / JCM 17883 / MC-1).